Reading from the N-terminus, the 161-residue chain is Cyclic pyranopterin monophosphate synthase (161 aa).

Residues 73–75 (LCH) and 110–111 (ME) contribute to the substrate site. The active site involves D125.

Belongs to the MoaC family. As to quaternary structure, homohexamer; trimer of dimers.

The catalysed reaction is (8S)-3',8-cyclo-7,8-dihydroguanosine 5'-triphosphate = cyclic pyranopterin phosphate + diphosphate. It functions in the pathway cofactor biosynthesis; molybdopterin biosynthesis. In terms of biological role, catalyzes the conversion of (8S)-3',8-cyclo-7,8-dihydroguanosine 5'-triphosphate to cyclic pyranopterin monophosphate (cPMP). The polypeptide is Cyclic pyranopterin monophosphate synthase (Pseudomonas syringae pv. tomato (strain ATCC BAA-871 / DC3000)).